The following is a 456-amino-acid chain: Adenylosuccinate lyase (456 aa).

N(6)-(1,2-dicarboxyethyl)-AMP contacts are provided by residues 15–16 (RY), 90–92 (NHD), and 122–123 (TS). Catalysis depends on His-171, which acts as the Proton donor/acceptor. Gln-247 is a N(6)-(1,2-dicarboxyethyl)-AMP binding site. Catalysis depends on Ser-295, which acts as the Proton donor/acceptor. Residues Ser-296, 301 to 303 (KVN), Asn-309, Arg-335, and 340 to 344 (STVLR) contribute to the N(6)-(1,2-dicarboxyethyl)-AMP site.

This sequence belongs to the lyase 1 family. Adenylosuccinate lyase subfamily. As to quaternary structure, homotetramer. Residues from neighboring subunits contribute catalytic and substrate-binding residues to each active site.

The enzyme catalyses N(6)-(1,2-dicarboxyethyl)-AMP = fumarate + AMP. It carries out the reaction (2S)-2-[5-amino-1-(5-phospho-beta-D-ribosyl)imidazole-4-carboxamido]succinate = 5-amino-1-(5-phospho-beta-D-ribosyl)imidazole-4-carboxamide + fumarate. The protein operates within purine metabolism; AMP biosynthesis via de novo pathway; AMP from IMP: step 2/2. It functions in the pathway purine metabolism; IMP biosynthesis via de novo pathway; 5-amino-1-(5-phospho-D-ribosyl)imidazole-4-carboxamide from 5-amino-1-(5-phospho-D-ribosyl)imidazole-4-carboxylate: step 2/2. Functionally, catalyzes two reactions in de novo purine nucleotide biosynthesis. Catalyzes the breakdown of 5-aminoimidazole- (N-succinylocarboxamide) ribotide (SAICAR or 2-[5-amino-1-(5-phospho-beta-D-ribosyl)imidazole-4-carboxamido]succinate) to 5-aminoimidazole-4-carboxamide ribotide (AICAR or 5-amino-1-(5-phospho-beta-D-ribosyl)imidazole-4-carboxamide) and fumarate, and of adenylosuccinate (ADS or N(6)-(1,2-dicarboxyethyl)-AMP) to adenosine monophosphate (AMP) and fumarate. The sequence is that of Adenylosuccinate lyase (purB) from Haemophilus influenzae (strain ATCC 51907 / DSM 11121 / KW20 / Rd).